We begin with the raw amino-acid sequence, 283 residues long: Urease accessory protein UreD (283 aa).

Positions 1–20 are disordered; it reads MTQTQPVGTLRLTIDDQGPQ.

It belongs to the UreD family. UreD, UreF and UreG form a complex that acts as a GTP-hydrolysis-dependent molecular chaperone, activating the urease apoprotein by helping to assemble the nickel containing metallocenter of UreC. The UreE protein probably delivers the nickel.

Its subcellular location is the cytoplasm. Its function is as follows. Required for maturation of urease via the functional incorporation of the urease nickel metallocenter. This Corynebacterium glutamicum (strain R) protein is Urease accessory protein UreD.